Here is a 254-residue protein sequence, read N- to C-terminus: MATAGNPWGWFLGYLILGVAGSLVSGSCSQIINGEDCSPHSQPWQAALVMENELFCSGVLVHPQWVLSAAHCFQNSYTIGLGLHSLEADQEPGSQMVEASLSVRHPEYNRPLLANDLMLIKLDESVSESDTIRSISIASQCPTAGNSCLVSGWGLLANGRMPTVLQCVNVSVVSEEVCSKLYDPLYHPSMFCAGGGHDQKDSCNGDSGGPLICNGYLQGLVSFGKAPCGQVGVPGVYTNLCKFTEWIEKTVQAS.

The first 26 residues, 1–26 (MATAGNPWGWFLGYLILGVAGSLVSG), serve as a signal peptide directing secretion. The propeptide occupies 27–30 (SCSQ). The Peptidase S1 domain maps to 31–252 (IINGEDCSPH…FTEWIEKTVQ (222 aa)). 6 disulfides stabilise this stretch: Cys37–Cys167, Cys56–Cys72, Cys141–Cys241, Cys148–Cys213, Cys178–Cys192, and Cys203–Cys228. His40 provides a ligand contact to Zn(2+). His71 (charge relay system) is an active-site residue. Glu91 is a binding site for Zn(2+). Asp116 serves as the catalytic Charge relay system. Asn169 carries an N-linked (GlcNAc...) asparagine glycan. Ser207 (charge relay system) is an active-site residue.

This sequence belongs to the peptidase S1 family. Kallikrein subfamily. In terms of processing, N-glycosylated. The N-glycan structures are of complex diantennary or triantennary type, which may be further modified with up to 2 sialic acid residues. In terms of tissue distribution, expressed in prostate.

Its subcellular location is the secreted. Functionally, has a major role in enamel formation. Required during the maturation stage of tooth development for clearance of enamel proteins and normal structural patterning of the crystalline matrix. The sequence is that of Kallikrein-4 (KLK4) from Homo sapiens (Human).